We begin with the raw amino-acid sequence, 133 residues long: Large ribosomal subunit protein bL17 (133 aa).

The protein belongs to the bacterial ribosomal protein bL17 family. As to quaternary structure, part of the 50S ribosomal subunit. Contacts protein L32.

In Idiomarina loihiensis (strain ATCC BAA-735 / DSM 15497 / L2-TR), this protein is Large ribosomal subunit protein bL17.